Here is a 566-residue protein sequence, read N- to C-terminus: KsdD-like steroid dehydrogenase MT0809 (566 aa).

23-54 provides a ligand contact to FAD; that stretch reads DAIVVGAGLAGLVAACELADRGLRVLILDQEN.

Belongs to the FAD-dependent oxidoreductase 2 family. Requires FAD as cofactor.

It participates in lipid metabolism; steroid biosynthesis. Its function is as follows. Able to catalyze the elimination of the C-1 and C-2 hydrogen atoms of the A-ring from the polycyclic ring structure of 3-ketosteroids. This chain is KsdD-like steroid dehydrogenase MT0809, found in Mycobacterium tuberculosis (strain CDC 1551 / Oshkosh).